We begin with the raw amino-acid sequence, 202 residues long: Transmembrane 4 L6 family member 4 (202 aa).

The Cytoplasmic segment spans residues 1–9; the sequence is MCTGGCARC. Residues 10-30 traverse the membrane as a helical segment; the sequence is LGGTLIPLAVFGLLANILLFF. Topologically, residues 31-48 are extracellular; sequence PGGKVVNDKSHLSDEVWY. A helical membrane pass occupies residues 49 to 69; that stretch reads FGGILGSGVLMIFPALVFLGL. Over 70–93 the chain is Cytoplasmic; it reads QNNDCCGCCGNEGCGKRFAMFTST. The chain crosses the membrane as a helical span at residues 94–114; sequence LFAVIGFLGAGYSFIVSAVSI. Residues 115-158 lie on the Extracellular side of the membrane; sequence NKGPKCFMANGTWGYPFHDGDYLKDQALWSECEEPRDVVPWNLT. Asparagine 156 carries an N-linked (GlcNAc...) asparagine glycan. A helical membrane pass occupies residues 159–179; sequence LFSILLVIGGIQMVLCAIQVI. Residues 180–202 are Cytoplasmic-facing; the sequence is NGLLGTLCGDCQCCGCCGGDGPV.

It belongs to the L6 tetraspanin family.

It localises to the membrane. In terms of biological role, regulates the adhesive and proliferative status of intestinal epithelial cells. Can mediate density-dependent cell proliferation. This Mus musculus (Mouse) protein is Transmembrane 4 L6 family member 4 (Tm4sf4).